The primary structure comprises 262 residues: Large ribosomal subunit protein eL8B (262 aa).

Residues 1-36 (MAPKGKKVAPAPLATKSAKSSESKNPLFESTPKNFG) are disordered.

It belongs to the eukaryotic ribosomal protein eL8 family. Component of the large ribosomal subunit. Mature ribosomes consist of a small (40S) and a large (60S) subunit. The 40S subunit contains about 32 different proteins and 1 molecule of RNA (18S). The 60S subunit contains 45 different proteins and 3 molecules of RNA (25S, 5.8S and 5S).

It is found in the cytoplasm. Component of the ribosome, a large ribonucleoprotein complex responsible for the synthesis of proteins in the cell. The small ribosomal subunit (SSU) binds messenger RNAs (mRNAs) and translates the encoded message by selecting cognate aminoacyl-transfer RNA (tRNA) molecules. The large subunit (LSU) contains the ribosomal catalytic site termed the peptidyl transferase center (PTC), which catalyzes the formation of peptide bonds, thereby polymerizing the amino acids delivered by tRNAs into a polypeptide chain. The nascent polypeptides leave the ribosome through a tunnel in the LSU and interact with protein factors that function in enzymatic processing, targeting, and the membrane insertion of nascent chains at the exit of the ribosomal tunnel. This chain is Large ribosomal subunit protein eL8B, found in Candida albicans (strain SC5314 / ATCC MYA-2876) (Yeast).